Consider the following 6486-residue polypeptide: Tyrocidine synthase 3 (6486 aa).

A domain 1 (asparagine-activating) region spans residues Ile-466–Arg-1038. 6 Carrier domains span residues Ala-965–Glu-1040, Ala-2002–Arg-2077, Ala-3040–Gly-3115, Ala-4075–Ala-4150, Ala-5119–Ala-5194, and Ala-6162–Arg-6237. Residues Ser-1000, Ser-2037, Ser-3075, Ser-4110, Ser-5154, and Ser-6197 each carry the O-(pantetheine 4'-phosphoryl)serine modification. The segment at Tyr-1521–Ala-2070 is domain 2 (glutamine-activating). The domain 3 (tyrosine-activating) stretch occupies residues Asn-2536–Thr-3113. The tract at residues Glu-3590 to Ser-4149 is domain 4 (valine-activating). The segment at Tyr-4606–Pro-5203 is domain 5 (ornithine-activating). Positions Leu-5658 to Ala-6245 are domain 6 (leucine-activating).

The protein belongs to the ATP-dependent AMP-binding enzyme family. As to quaternary structure, large multienzyme complex of TycA, TycB and TycC. Pantetheine 4'-phosphate serves as cofactor.

Its pathway is antibiotic biosynthesis; tyrocidine biosynthesis. Its function is as follows. Incorporates six amino acids (for tyrocidine A, Asn, Gln, Tyr, Val, Orn, and Leu) in their L-configuration into the peptide product. The polypeptide is Tyrocidine synthase 3 (tycC) (Brevibacillus parabrevis).